We begin with the raw amino-acid sequence, 130 residues long: Small ribosomal subunit protein uS8 (130 aa).

It belongs to the universal ribosomal protein uS8 family.

The protein is Small ribosomal subunit protein uS8 (RPS15A) of Paracentrotus lividus (Common sea urchin).